The primary structure comprises 237 residues: 2-C-methyl-D-erythritol 4-phosphate cytidylyltransferase (237 aa).

The protein belongs to the IspD/TarI cytidylyltransferase family. IspD subfamily.

It catalyses the reaction 2-C-methyl-D-erythritol 4-phosphate + CTP + H(+) = 4-CDP-2-C-methyl-D-erythritol + diphosphate. It functions in the pathway isoprenoid biosynthesis; isopentenyl diphosphate biosynthesis via DXP pathway; isopentenyl diphosphate from 1-deoxy-D-xylulose 5-phosphate: step 2/6. Functionally, catalyzes the formation of 4-diphosphocytidyl-2-C-methyl-D-erythritol from CTP and 2-C-methyl-D-erythritol 4-phosphate (MEP). The polypeptide is 2-C-methyl-D-erythritol 4-phosphate cytidylyltransferase (Vibrio vulnificus (strain YJ016)).